Here is a 569-residue protein sequence, read N- to C-terminus: Potassium-transporting ATPase potassium-binding subunit (569 aa).

10 helical membrane passes run 11–31, 64–84, 135–155, 179–199, 258–278, 285–305, 384–404, 423–443, 490–510, and 531–551; these read LLLA…ACVF, LAYT…LYGI, AGLA…ALAV, LYLL…MGIP, FNIL…GKMV, WALI…VYIA, GLYG…LMVG, MLAV…AAVL, LGIS…AIAG, and LFVG…YFPA.

This sequence belongs to the KdpA family. The system is composed of three essential subunits: KdpA, KdpB and KdpC.

It localises to the cell inner membrane. Functionally, part of the high-affinity ATP-driven potassium transport (or Kdp) system, which catalyzes the hydrolysis of ATP coupled with the electrogenic transport of potassium into the cytoplasm. This subunit binds the periplasmic potassium ions and delivers the ions to the membrane domain of KdpB through an intramembrane tunnel. The chain is Potassium-transporting ATPase potassium-binding subunit from Allorhizobium ampelinum (strain ATCC BAA-846 / DSM 112012 / S4) (Agrobacterium vitis (strain S4)).